We begin with the raw amino-acid sequence, 275 residues long: Large ribosomal subunit protein uL2c (275 aa).

The disordered stretch occupies residues 222–258 (GSAMNPVDHPHGGGEGRAPIGRARPVSPWGRPALGAK).

It belongs to the universal ribosomal protein uL2 family. As to quaternary structure, part of the 50S ribosomal subunit.

It is found in the plastid. The protein resides in the chloroplast. This Chlorella vulgaris (Green alga) protein is Large ribosomal subunit protein uL2c (rpl2).